Reading from the N-terminus, the 206-residue chain is Proteasome subunit beta type-2 (206 aa).

The protein belongs to the peptidase T1B family. The 26S proteasome consists of a 20S proteasome core and two 19S regulatory subunits. The 20S proteasome core is composed of 28 subunits that are arranged in four stacked rings, resulting in a barrel-shaped structure. The two end rings are each formed by seven alpha subunits, and the two central rings are each formed by seven beta subunits. The catalytic chamber with the active sites is on the inside of the barrel.

Its subcellular location is the cytoplasm. The protein localises to the nucleus. Non-catalytic component of the proteasome, a multicatalytic proteinase complex which is characterized by its ability to cleave peptides with Arg, Phe, Tyr, Leu, and Glu adjacent to the leaving group at neutral or slightly basic pH. The proteasome has an ATP-dependent proteolytic activity. This is Proteasome subunit beta type-2 (PSB4) from Trypanosoma brucei brucei.